The sequence spans 287 residues: Diphthine methyl ester synthase (287 aa).

S-adenosyl-L-methionine is bound by residues L9, D84, G87, 112 to 113 (SI), V163, V221, and H248.

This sequence belongs to the diphthine synthase family.

Its subcellular location is the cytoplasm. The catalysed reaction is 2-[(3S)-amino-3-carboxypropyl]-L-histidyl-[translation elongation factor 2] + 4 S-adenosyl-L-methionine = diphthine methyl ester-[translation elongation factor 2] + 4 S-adenosyl-L-homocysteine + 3 H(+). It functions in the pathway protein modification; peptidyl-diphthamide biosynthesis. Functionally, S-adenosyl-L-methionine-dependent methyltransferase that catalyzes four methylations of the modified target histidine residue in translation elongation factor 2 (EF-2), to form an intermediate called diphthine methyl ester. The four successive methylation reactions represent the second step of diphthamide biosynthesis. This Gibberella zeae (strain ATCC MYA-4620 / CBS 123657 / FGSC 9075 / NRRL 31084 / PH-1) (Wheat head blight fungus) protein is Diphthine methyl ester synthase (DPH5).